The following is a 191-amino-acid chain: LHFPL tetraspan subfamily member 7 protein (191 aa).

4 helical membrane-spanning segments follow: residues 6–26 (MGSL…FSLM), 72–92 (IAAV…VLVL), 112–132 (YAQI…PFNL), and 154–174 (LGWG…LPFI).

This sequence belongs to the TMEM211 family.

It is found in the membrane. The protein is LHFPL tetraspan subfamily member 7 protein (lhfpl7) of Xenopus tropicalis (Western clawed frog).